A 245-amino-acid chain; its full sequence is Probable phosphatase YcdX (245 aa).

Zn(2+) contacts are provided by His7, His9, His15, His40, Glu73, His101, His131, Asp192, and His194.

The protein belongs to the PHP family. As to quaternary structure, homotrimer. Zn(2+) is required as a cofactor.

The polypeptide is Probable phosphatase YcdX (Escherichia coli (strain K12 / MC4100 / BW2952)).